We begin with the raw amino-acid sequence, 264 residues long: Thiazole synthase (264 aa).

Lys-106 (schiff-base intermediate with DXP) is an active-site residue. 1-deoxy-D-xylulose 5-phosphate-binding positions include Gly-167, 193 to 194 (AG), and 215 to 216 (NS).

It belongs to the ThiG family. Homotetramer. Forms heterodimers with either ThiH or ThiS.

It localises to the cytoplasm. It carries out the reaction [ThiS sulfur-carrier protein]-C-terminal-Gly-aminoethanethioate + 2-iminoacetate + 1-deoxy-D-xylulose 5-phosphate = [ThiS sulfur-carrier protein]-C-terminal Gly-Gly + 2-[(2R,5Z)-2-carboxy-4-methylthiazol-5(2H)-ylidene]ethyl phosphate + 2 H2O + H(+). It functions in the pathway cofactor biosynthesis; thiamine diphosphate biosynthesis. Its function is as follows. Catalyzes the rearrangement of 1-deoxy-D-xylulose 5-phosphate (DXP) to produce the thiazole phosphate moiety of thiamine. Sulfur is provided by the thiocarboxylate moiety of the carrier protein ThiS. In vitro, sulfur can be provided by H(2)S. This chain is Thiazole synthase, found in Prochlorococcus marinus (strain MIT 9312).